A 602-amino-acid chain; its full sequence is Elongation factor 4 (602 aa).

The tr-type G domain maps to 7-189; sequence KYIRNFSIVA…AIVNKVPAPD (183 aa). GTP is bound by residues 19–24 and 136–139; these read DHGKST and NKID.

This sequence belongs to the TRAFAC class translation factor GTPase superfamily. Classic translation factor GTPase family. LepA subfamily.

Its subcellular location is the cell membrane. It carries out the reaction GTP + H2O = GDP + phosphate + H(+). Required for accurate and efficient protein synthesis under certain stress conditions. May act as a fidelity factor of the translation reaction, by catalyzing a one-codon backward translocation of tRNAs on improperly translocated ribosomes. Back-translocation proceeds from a post-translocation (POST) complex to a pre-translocation (PRE) complex, thus giving elongation factor G a second chance to translocate the tRNAs correctly. Binds to ribosomes in a GTP-dependent manner. In Clostridium botulinum (strain ATCC 19397 / Type A), this protein is Elongation factor 4.